The sequence spans 505 residues: Histidine ammonia-lyase (505 aa).

The 5-imidazolinone (Ala-Gly) cross-link spans 141 to 143 (ASG). Residue Ser-142 is modified to 2,3-didehydroalanine (Ser).

Belongs to the PAL/histidase family. Contains an active site 4-methylidene-imidazol-5-one (MIO), which is formed autocatalytically by cyclization and dehydration of residues Ala-Ser-Gly.

It is found in the cytoplasm. The enzyme catalyses L-histidine = trans-urocanate + NH4(+). The protein operates within amino-acid degradation; L-histidine degradation into L-glutamate; N-formimidoyl-L-glutamate from L-histidine: step 1/3. This is Histidine ammonia-lyase from Bacillus thuringiensis (strain Al Hakam).